A 473-amino-acid polypeptide reads, in one-letter code: Aspartyl/glutamyl-tRNA(Asn/Gln) amidotransferase subunit B (473 aa).

It belongs to the GatB/GatE family. GatB subfamily. Heterotrimer of A, B and C subunits.

It catalyses the reaction L-glutamyl-tRNA(Gln) + L-glutamine + ATP + H2O = L-glutaminyl-tRNA(Gln) + L-glutamate + ADP + phosphate + H(+). The enzyme catalyses L-aspartyl-tRNA(Asn) + L-glutamine + ATP + H2O = L-asparaginyl-tRNA(Asn) + L-glutamate + ADP + phosphate + 2 H(+). Functionally, allows the formation of correctly charged Asn-tRNA(Asn) or Gln-tRNA(Gln) through the transamidation of misacylated Asp-tRNA(Asn) or Glu-tRNA(Gln) in organisms which lack either or both of asparaginyl-tRNA or glutaminyl-tRNA synthetases. The reaction takes place in the presence of glutamine and ATP through an activated phospho-Asp-tRNA(Asn) or phospho-Glu-tRNA(Gln). The polypeptide is Aspartyl/glutamyl-tRNA(Asn/Gln) amidotransferase subunit B (Sulfurisphaera tokodaii (strain DSM 16993 / JCM 10545 / NBRC 100140 / 7) (Sulfolobus tokodaii)).